Reading from the N-terminus, the 551-residue chain is MITVSEVSSYSSSSSNFASLSRLNHKSSSRLRSSSLYKGSFFSVSTKTRRNTCKAKSWNLGLVINSRSSEASVFDPLGINPDETSGLSSIWESFVSLLSPSFESSSGNRRDKPSSGRGVAAAIEDSSIDFGDFFKGPLPGKFLKLLGFLALSRLGIYIPLGGVNREAFVGNLDQNSILSTLDTFSGGGIGRLGICSLGIVPFINAQIVFQLLAQVYPKLQDLQKKEGEAGRKKILQYTRYASVGFAIVQAIGQVFYLRPYVNDFSTEWVVSSVTLLTLGSVLTTYIGERISDLKLGNGTSLLIFTSIISYLPASFGRTTAEALQEGNYTGLGTIVVSFLLLVLGIVYVQEAERKIPLNYASRYTSKAGGLQKSAYLPFKVNSAGVMPIIFSTSSLALPATLARFTGISALKNVAFALTPGGSFYLPTNILLIAFFNYYYTFLQLDPDDVSEQLKRQGASIPLVRPGKSTALFIKTVLGRISVLGSAFLAVLAAGPAVVEQITHLTAFRGFAGTSVLILVGCATDTARKVQAEIISQKYKNIEFYELDKYDP.

A chloroplast-targeting transit peptide spans 1-67 (MITVSEVSSY…WNLGLVINSR (67 aa)). 10 consecutive transmembrane segments (helical) span residues 142 to 162 (FLKL…PLGG), 192 to 212 (LGIC…FQLL), 241 to 261 (ASVG…RPYV), 268 to 288 (WVVS…YIGE), 295 to 315 (LGNG…PASF), 328 to 348 (YTGL…IVYV), 382 to 402 (SAGV…ATLA), 415 to 435 (FALT…IAFF), 482 to 502 (VLGS…EQIT), and 503 to 523 (HLTA…GCAT).

It belongs to the SecY/SEC61-alpha family. In terms of assembly, part of the Sec protein translocation apparatus. Interacts with SECE1, ALB3 and probably with SECA1.

Its subcellular location is the plastid. It localises to the chloroplast thylakoid membrane. Functionally, involved in protein export. Probably interacts with other proteins to allow the translocation of proteins across the chloroplast thylakoid membranes. Required for normal greening during embryogenesis. Central subunit of the protein translocation channel SecYE. Consists of two halves formed by TMs 1-5 and 6-10. These two domains form a lateral gate at the front which open onto the bilayer between TMs 2 and 7, and are clamped together by SecE at the back. The channel is closed by both a pore ring composed of hydrophobic SecY resides and a short helix (helix 2A) on the extracellular side of the membrane which forms a plug. The polypeptide is Preprotein translocase subunit SCY1, chloroplastic (SCY1) (Arabidopsis thaliana (Mouse-ear cress)).